We begin with the raw amino-acid sequence, 134 residues long: Translation initiation factor 2 subunit beta (134 aa).

Residues Met-1 to Glu-12 show a composition bias toward basic and acidic residues. A disordered region spans residues Met-1–Asp-28.

Belongs to the eIF-2-beta/eIF-5 family. Heterotrimer composed of an alpha, a beta and a gamma chain.

Its function is as follows. eIF-2 functions in the early steps of protein synthesis by forming a ternary complex with GTP and initiator tRNA. The protein is Translation initiation factor 2 subunit beta of Haloarcula marismortui (strain ATCC 43049 / DSM 3752 / JCM 8966 / VKM B-1809) (Halobacterium marismortui).